An 817-amino-acid chain; its full sequence is Lon protease (817 aa).

The Lon N-terminal domain maps to 44–239 (LPILPLRNTV…ETLRYMNVEL (196 aa)). 390 to 397 (GPPGVGKT) contacts ATP. Positions 626-807 (NDVAGVVTGL…SEVLAIALTD (182 aa)) constitute a Lon proteolytic domain. Active-site residues include serine 713 and lysine 756.

It belongs to the peptidase S16 family. As to quaternary structure, homohexamer. Organized in a ring with a central cavity.

It localises to the cytoplasm. The catalysed reaction is Hydrolysis of proteins in presence of ATP.. Its function is as follows. ATP-dependent serine protease that mediates the selective degradation of mutant and abnormal proteins as well as certain short-lived regulatory proteins. Required for cellular homeostasis and for survival from DNA damage and developmental changes induced by stress. Degrades polypeptides processively to yield small peptide fragments that are 5 to 10 amino acids long. Binds to DNA in a double-stranded, site-specific manner. This is Lon protease from Flavobacterium johnsoniae (strain ATCC 17061 / DSM 2064 / JCM 8514 / BCRC 14874 / CCUG 350202 / NBRC 14942 / NCIMB 11054 / UW101) (Cytophaga johnsonae).